We begin with the raw amino-acid sequence, 185 residues long: N-alpha-acetyltransferase 30 (185 aa).

The N-acetyltransferase domain occupies I31–N179.

The protein belongs to the acetyltransferase family. MAK3 subfamily.

In terms of biological role, probable catalytic component of a complex displaying alpha (N-terminal) acetyltransferase activity. In Dictyostelium discoideum (Social amoeba), this protein is N-alpha-acetyltransferase 30.